Reading from the N-terminus, the 765-residue chain is Probable exo-1,4-beta-xylosidase bxlB (765 aa).

The N-terminal stretch at 1-25 is a signal peptide; that stretch reads MYSSNSRRAASILACIVSLTQLGFA. N-linked (GlcNAc...) asparagine glycosylation is found at Asn-67 and Asn-107. Asp-293 is a catalytic residue. N-linked (GlcNAc...) asparagine glycans are attached at residues Asn-345, Asn-412, Asn-423, Asn-464, and Asn-761.

The protein belongs to the glycosyl hydrolase 3 family.

It localises to the secreted. The catalysed reaction is Hydrolysis of (1-&gt;4)-beta-D-xylans, to remove successive D-xylose residues from the non-reducing termini.. It participates in glycan degradation; xylan degradation. In terms of biological role, xylan 1,4-beta-xylosidase involved in the hydrolysis of xylan, a major structural heterogeneous polysaccharide found in plant biomass representing the second most abundant polysaccharide in the biosphere, after cellulose. This is Probable exo-1,4-beta-xylosidase bxlB (bxlB) from Aspergillus terreus (strain NIH 2624 / FGSC A1156).